Here is a 439-residue protein sequence, read N- to C-terminus: 26S proteasome regulatory subunit 4 homolog (439 aa).

Residues 1–46 (MGNNQSQGQGDKGEKKDQPKYQPPPPPTQFGKKKKRRGAETSTKLP) form a disordered region. 225 to 232 (GEPGTGKT) provides a ligand contact to ATP.

It belongs to the AAA ATPase family.

It localises to the cytoplasm. It is found in the nucleus. Its function is as follows. The 26S proteasome is involved in the ATP-dependent degradation of ubiquitinated proteins. The regulatory (or ATPase) complex confers ATP dependency and substrate specificity to the 26S complex. Plays an important role in regulating both growth and multicellular development. In Dictyostelium discoideum (Social amoeba), this protein is 26S proteasome regulatory subunit 4 homolog (psmC1).